The following is a 577-amino-acid chain: MNAFANVHSLRVPSHHLRDFSASLSLAPPNLKKIIKQCSTPKLLESALAAMIKTSLNQDCRLMNQFITACTSFKRLDLAVSTMTQMQEPNVFVYNALFKGFVTCSHPIRSLELYVRMLRDSVSPSSYTYSSLVKASSFASRFGESLQAHIWKFGFGFHVKIQTTLIDFYSATGRIREARKVFDEMPERDDIAWTTMVSAYRRVLDMDSANSLANQMSEKNEATSNCLINGYMGLGNLEQAESLFNQMPVKDIISWTTMIKGYSQNKRYREAIAVFYKMMEEGIIPDEVTMSTVISACAHLGVLEIGKEVHMYTLQNGFVLDVYIGSALVDMYSKCGSLERALLVFFNLPKKNLFCWNSIIEGLAAHGFAQEALKMFAKMEMESVKPNAVTFVSVFTACTHAGLVDEGRRIYRSMIDDYSIVSNVEHYGGMVHLFSKAGLIYEALELIGNMEFEPNAVIWGALLDGCRIHKNLVIAEIAFNKLMVLEPMNSGYYFLLVSMYAEQNRWRDVAEIRGRMRELGIEKICPGTSSIRIDKRDHLFAAADKSHSASDEVCLLLDEIYDQMGLAGYVQETENVY.

PPR repeat units lie at residues 59–89, 90–124, 125–155, 158–192, 193–219, 220–250, 251–285, 286–320, 321–351, 352–386, 387–417, and 423–453; these read DCRL…MQEP, NVFV…SVSP, SSYT…KFGF, HVKI…DDIA, WTTM…MSEK, NEAT…MPVK, DIIS…GIIP, DEVT…GFVL, DVYI…LPKK, NLFC…SVKP, NAVT…MIDD, and NVEH…MEFE. Positions 458-534 are type E motif; that stretch reads IWGALLDGCR…CPGTSSIRID (77 aa). Residues 535-565 are type E(+) motif; sequence KRDHLFAAADKSHSASDEVCLLLDEIYDQMG.

It belongs to the PPR family. PCMP-E subfamily.

The sequence is that of Pentatricopeptide repeat-containing protein At1g06143 (EMB1444) from Arabidopsis thaliana (Mouse-ear cress).